Here is a 209-residue protein sequence, read N- to C-terminus: Uracil phosphoribosyltransferase (209 aa).

Residues arginine 79, arginine 104, and 131–139 (DPMLATGGS) contribute to the 5-phospho-alpha-D-ribose 1-diphosphate site. Uracil contacts are provided by residues isoleucine 194 and 199-201 (GDA). 5-phospho-alpha-D-ribose 1-diphosphate is bound at residue aspartate 200.

The protein belongs to the UPRTase family. It depends on Mg(2+) as a cofactor.

It catalyses the reaction UMP + diphosphate = 5-phospho-alpha-D-ribose 1-diphosphate + uracil. Its pathway is pyrimidine metabolism; UMP biosynthesis via salvage pathway; UMP from uracil: step 1/1. With respect to regulation, allosterically activated by GTP. Catalyzes the conversion of uracil and 5-phospho-alpha-D-ribose 1-diphosphate (PRPP) to UMP and diphosphate. In Halalkalibacterium halodurans (strain ATCC BAA-125 / DSM 18197 / FERM 7344 / JCM 9153 / C-125) (Bacillus halodurans), this protein is Uracil phosphoribosyltransferase.